Consider the following 155-residue polypeptide: Glutamyl-tRNA(Gln) amidotransferase subunit C, chloroplastic/mitochondrial (155 aa).

The N-terminal 52 residues, Met1–Tyr52, are a transit peptide targeting the chloroplast and mitochondrion.

It belongs to the GatC family. As to quaternary structure, subunit of the heterotrimeric GatCAB amidotransferase (AdT) complex, composed of A, B and C subunits.

The protein resides in the mitochondrion. The protein localises to the plastid. Its subcellular location is the chloroplast. It carries out the reaction L-glutamyl-tRNA(Gln) + L-glutamine + ATP + H2O = L-glutaminyl-tRNA(Gln) + L-glutamate + ADP + phosphate + H(+). In terms of biological role, allows the formation of correctly charged Gln-tRNA(Gln) through the transamidation of misacylated Glu-tRNA(Gln) in chloroplasts and mitochondria. The reaction takes place in the presence of glutamine and ATP through an activated gamma-phospho-Glu-tRNA(Gln). The chain is Glutamyl-tRNA(Gln) amidotransferase subunit C, chloroplastic/mitochondrial from Arabidopsis thaliana (Mouse-ear cress).